A 251-amino-acid polypeptide reads, in one-letter code: MNLNSIPAFDDNYIWVLNDEAGRCLIVDPGDAEPVLNAIAANNWQPEAIFLTHHHHDHVGGVKELVEKFPQIVVYGPQETQDKGTTQVVKDGETAFVLGHEFSVIATPGHTLGHICYFSKPYLFCGDTLFSGGCGRLFEGTASQMYQSLKKLSALPDDTLVCCAHEYTLSNMKFALSILPHDLSINDYYRKVKELRAKNQITLPVILKNERQINVFLRTEDIDLINVINEETLLQQPEERFAWLRSKKDRF.

His-53, His-55, Asp-57, His-58, His-110, and Asp-127 together coordinate Zn(2+). Residues 136–138, 165–167, and 245–248 each bind substrate; these read RLF, HEY, and RSKK. His-165 is a binding site for Zn(2+).

Belongs to the metallo-beta-lactamase superfamily. Glyoxalase II family. In terms of assembly, monomer. Zn(2+) serves as cofactor.

It carries out the reaction an S-(2-hydroxyacyl)glutathione + H2O = a 2-hydroxy carboxylate + glutathione + H(+). It catalyses the reaction (R)-S-lactoylglutathione + H2O = (R)-lactate + glutathione + H(+). It participates in secondary metabolite metabolism; methylglyoxal degradation; (R)-lactate from methylglyoxal: step 2/2. With respect to regulation, is inhibited by Cu(2+). Functionally, type II glyoxalase that catalyzes the hydrolysis of (R)-S-lactoylglutathione to (R)-lactate and glutathione. Is more efficient than the isozyme GloC, and plays a major contribution to methylglyoxal (MG) detoxification in E.coli. The two isoenzymes have additive effects and ensure maximal MG degradation. The chain is Hydroxyacylglutathione hydrolase GloB from Escherichia coli (strain K12).